Reading from the N-terminus, the 122-residue chain is Large ribosomal subunit protein uL14c (122 aa).

It belongs to the universal ribosomal protein uL14 family. As to quaternary structure, part of the 50S ribosomal subunit.

The protein localises to the plastid. Its subcellular location is the chloroplast. Functionally, binds to 23S rRNA. In Carica papaya (Papaya), this protein is Large ribosomal subunit protein uL14c.